An 85-amino-acid polypeptide reads, in one-letter code: Photosystem I reaction center subunit PsaK (85 aa).

The next 2 membrane-spanning stretches (helical) occupy residues 13–33 (VSWTPKVALVMIICNVIAIAI) and 59–79 (GAMLGCTSFGHLLGMGAILGL).

This sequence belongs to the PsaG/PsaK family.

It localises to the cellular thylakoid membrane. The protein is Photosystem I reaction center subunit PsaK of Synechococcus sp. (strain WH7803).